We begin with the raw amino-acid sequence, 446 residues long: Putative zinc metalloprotease NMA0084 (446 aa).

Zn(2+) is bound at residue histidine 18. The active site involves glutamate 19. A Zn(2+)-binding site is contributed by histidine 22. 3 consecutive transmembrane segments (helical) span residues isoleucine 93 to phenylalanine 115, phenylalanine 376 to glycine 398, and asparagine 419 to phenylalanine 438. Residues proline 100 to serine 181 form the PDZ domain.

This sequence belongs to the peptidase M50B family. Zn(2+) is required as a cofactor.

The protein localises to the cell inner membrane. This is Putative zinc metalloprotease NMA0084 from Neisseria meningitidis serogroup A / serotype 4A (strain DSM 15465 / Z2491).